A 273-amino-acid chain; its full sequence is Inositol monophosphatase 1 (273 aa).

Mg(2+)-binding residues include Glu-71, Asp-91, Val-93, and Asp-94. Glu-71 contributes to the substrate binding site. Residues 93–96 (VDGT), 194–196 (GSC), and Asp-221 contribute to the substrate site. Residue Asp-221 coordinates Mg(2+).

Belongs to the inositol monophosphatase superfamily. The cofactor is Mg(2+). In terms of tissue distribution, expressed in seedlings, flowers, young and matures green fruits. Detected in roots and stems.

It carries out the reaction a myo-inositol phosphate + H2O = myo-inositol + phosphate. It functions in the pathway polyol metabolism; myo-inositol biosynthesis; myo-inositol from D-glucose 6-phosphate: step 2/2. Its function is as follows. Responsible for the provision of inositol required for synthesis of phosphatidylinositol and polyphosphoinositides. In Solanum lycopersicum (Tomato), this protein is Inositol monophosphatase 1 (IMP1).